Here is a 504-residue protein sequence, read N- to C-terminus: Anaerobic nitric oxide reductase transcription regulator NorR (504 aa).

Asp57 is modified (4-aspartylphosphate). Residues 187–416 (MIGLSPGMTQ…LEHAIHRAVV (230 aa)) form the Sigma-54 factor interaction domain. ATP is bound by residues 215 to 222 (GETGTGKE) and 278 to 287 (ADNGTLFLDE). The segment at residues 479-498 (WAACARMLETDVANLHRLAK) is a DNA-binding region (H-T-H motif).

The protein operates within nitrogen metabolism; nitric oxide reduction. Required for the expression of anaerobic nitric oxide (NO) reductase, acts as a transcriptional activator for at least the norVW operon. Activation also requires sigma-54. This chain is Anaerobic nitric oxide reductase transcription regulator NorR, found in Escherichia coli O9:H4 (strain HS).